We begin with the raw amino-acid sequence, 153 residues long: 3-hydroxyacyl-[acyl-carrier-protein] dehydratase FabZ (153 aa).

Residue His57 is part of the active site.

This sequence belongs to the thioester dehydratase family. FabZ subfamily.

The protein resides in the cytoplasm. The enzyme catalyses a (3R)-hydroxyacyl-[ACP] = a (2E)-enoyl-[ACP] + H2O. In terms of biological role, involved in unsaturated fatty acids biosynthesis. Catalyzes the dehydration of short chain beta-hydroxyacyl-ACPs and long chain saturated and unsaturated beta-hydroxyacyl-ACPs. The protein is 3-hydroxyacyl-[acyl-carrier-protein] dehydratase FabZ of Xanthomonas campestris pv. campestris (strain 8004).